Reading from the N-terminus, the 461-residue chain is tRNA modification GTPase MnmE (461 aa).

(6S)-5-formyl-5,6,7,8-tetrahydrofolate contacts are provided by Arg23, Glu88, and Arg127. A TrmE-type G domain is found at 223–383 (GLNTVIVGKP…LKECIKNLFF (161 aa)). Asn233 lines the K(+) pocket. Residues 233-238 (NVGKSS), 252-258 (TEIPGTT), and 277-280 (DTAG) contribute to the GTP site. Ser237 lines the Mg(2+) pocket. 3 residues coordinate K(+): Thr252, Ile254, and Thr257. A Mg(2+)-binding site is contributed by Thr258. Lys461 contacts (6S)-5-formyl-5,6,7,8-tetrahydrofolate.

Belongs to the TRAFAC class TrmE-Era-EngA-EngB-Septin-like GTPase superfamily. TrmE GTPase family. In terms of assembly, homodimer. Heterotetramer of two MnmE and two MnmG subunits. K(+) serves as cofactor.

Its subcellular location is the cytoplasm. Functionally, exhibits a very high intrinsic GTPase hydrolysis rate. Involved in the addition of a carboxymethylaminomethyl (cmnm) group at the wobble position (U34) of certain tRNAs, forming tRNA-cmnm(5)s(2)U34. This is tRNA modification GTPase MnmE from Clostridium botulinum (strain Loch Maree / Type A3).